The chain runs to 400 residues: Argininosuccinate synthase (400 aa).

An ATP-binding site is contributed by 9-17 (AYSGGLDTS). Residue Y87 coordinates L-citrulline. G117 provides a ligand contact to ATP. 3 residues coordinate L-aspartate: T119, N123, and D124. L-citrulline is bound at residue N123. L-citrulline is bound by residues R127, S176, S185, E261, and Y273.

Belongs to the argininosuccinate synthase family. Type 1 subfamily. As to quaternary structure, homotetramer.

The protein resides in the cytoplasm. The enzyme catalyses L-citrulline + L-aspartate + ATP = 2-(N(omega)-L-arginino)succinate + AMP + diphosphate + H(+). It participates in amino-acid biosynthesis; L-arginine biosynthesis; L-arginine from L-ornithine and carbamoyl phosphate: step 2/3. This is Argininosuccinate synthase from Pelodictyon phaeoclathratiforme (strain DSM 5477 / BU-1).